The chain runs to 218 residues: Pyridoxal phosphate homeostasis protein (218 aa).

Lysine 25 bears the N6-(pyridoxal phosphate)lysine mark.

This sequence belongs to the pyridoxal phosphate-binding protein YggS/PROSC family.

In terms of biological role, pyridoxal 5'-phosphate (PLP)-binding protein, which is involved in PLP homeostasis. This chain is Pyridoxal phosphate homeostasis protein, found in Synechocystis sp. (strain ATCC 27184 / PCC 6803 / Kazusa).